We begin with the raw amino-acid sequence, 506 residues long: Ribose import ATP-binding protein RbsA 2 (506 aa).

ABC transporter domains lie at 5-241 and 251-498; these read LRLS…VGRR and VRAA…TAGT. 37 to 44 contributes to the ATP binding site; that stretch reads GENGAGKS.

The protein belongs to the ABC transporter superfamily. Ribose importer (TC 3.A.1.2.1) family. In terms of assembly, the complex is composed of an ATP-binding protein (RbsA), two transmembrane proteins (RbsC) and a solute-binding protein (RbsB).

It localises to the cell inner membrane. It catalyses the reaction D-ribose(out) + ATP + H2O = D-ribose(in) + ADP + phosphate + H(+). In terms of biological role, part of the ABC transporter complex RbsABC involved in ribose import. Responsible for energy coupling to the transport system. The sequence is that of Ribose import ATP-binding protein RbsA 2 from Burkholderia ambifaria (strain ATCC BAA-244 / DSM 16087 / CCUG 44356 / LMG 19182 / AMMD) (Burkholderia cepacia (strain AMMD)).